Reading from the N-terminus, the 113-residue chain is MLITTTPTIEGRKILHYRGLVTGETIIGANIFRDILASITDVIGGRSKAYEDALMTARDNAIEEMKNRATLMQANAIVGVDLDYEVFGEGGMMMVSVSGTAVLLEGGTGVPLA.

The protein belongs to the UPF0145 family.

This Synechococcus sp. (strain WH7803) protein is UPF0145 protein SynWH7803_1684.